Here is a 324-residue protein sequence, read N- to C-terminus: MKRPCEDSTSDSDMDETIDVGSENNYSGQSNGSFIRCGSPTTTSQVMARKKRRGIIEKRRRDRINNSLSELRRLVPTAFEKQGSAKLEKAEILQMTVDHLKMLQATGGKGYFDAHSLAMDFLSIGFRECLTEVARYLSSVEGLDSSDPLRVRLVSHLSSCASQREAAAMTTSIAHHQQALHPHHWAAALHPIPAAFLQQSGLPSSESSSGRLSEAPQRGAALFSHSDSALRAPSTGSVAPCVPPLSTSLLSLSATVHAAAAAAAAQTFPLSFPAGFPLFSPSVTASSVASSTVSSSVSTSTTSQQSSGSSSKPYRPWGTEVGAF.

A disordered region spans residues 1-34 (MKRPCEDSTSDSDMDETIDVGSENNYSGQSNGSF). Residues 8-18 (STSDSDMDETI) are compositionally biased toward acidic residues. Residues 22 to 34 (SENNYSGQSNGSF) show a composition bias toward polar residues. In terms of domain architecture, bHLH spans 48 to 103 (ARKKRRGIIEKRRRDRINNSLSELRRLVPTAFEKQGSAKLEKAEILQMTVDHLKML). In terms of domain architecture, Orange spans 122-157 (LSIGFRECLTEVARYLSSVEGLDSSDPLRVRLVSHL). Over residues 294–311 (SSSVSTSTTSQQSSGSSS) the composition is skewed to low complexity. The disordered stretch occupies residues 294–324 (SSSVSTSTTSQQSSGSSSKPYRPWGTEVGAF). The YRPW motif signature appears at 314 to 317 (YRPW).

It belongs to the HEY family.

The protein resides in the nucleus. Functionally, transcriptional repressor. Downstream effector of Notch signaling which regulates cell fate choice in angioblasts. Represses the venous cell fate, thereby promoting the arterial cell fate and aorta formation. The protein is Hairy/enhancer-of-split related with YRPW motif protein 2 (hey2) of Danio rerio (Zebrafish).